The primary structure comprises 314 residues: DNA-directed RNA polymerase subunit alpha (314 aa).

The interval 1–228 (MIEFEKPNIH…EHLGLFMDIS (228 aa)) is alpha N-terminal domain (alpha-NTD). The segment at 242 to 314 (PVAASASDSA…DMNLGFRKED (73 aa)) is alpha C-terminal domain (alpha-CTD).

The protein belongs to the RNA polymerase alpha chain family. As to quaternary structure, homodimer. The RNAP catalytic core consists of 2 alpha, 1 beta, 1 beta' and 1 omega subunit. When a sigma factor is associated with the core the holoenzyme is formed, which can initiate transcription.

The enzyme catalyses RNA(n) + a ribonucleoside 5'-triphosphate = RNA(n+1) + diphosphate. Its function is as follows. DNA-dependent RNA polymerase catalyzes the transcription of DNA into RNA using the four ribonucleoside triphosphates as substrates. This is DNA-directed RNA polymerase subunit alpha from Leuconostoc mesenteroides subsp. mesenteroides (strain ATCC 8293 / DSM 20343 / BCRC 11652 / CCM 1803 / JCM 6124 / NCDO 523 / NBRC 100496 / NCIMB 8023 / NCTC 12954 / NRRL B-1118 / 37Y).